Reading from the N-terminus, the 399-residue chain is L-asparaginase-like protein GG20738 (399 aa).

The first 22 residues, 1–22 (MLAQSCCLRLLILLLLCKSTCS), serve as a signal peptide directing secretion. 3 disulfides stabilise this stretch: Cys-90-Cys-95, Cys-189-Cys-205, and Cys-344-Cys-371.

This sequence belongs to the Ntn-hydrolase family.

The polypeptide is L-asparaginase-like protein GG20738 (Drosophila erecta (Fruit fly)).